The sequence spans 200 residues: Lipopolysaccharide core heptose(II)-phosphate phosphatase (200 aa).

Positions 1 to 25 are cleaved as a signal peptide; the sequence is MLAFCRSSLKSKKYFIILLALAAIA.

Belongs to the phosphoglycerate mutase family. Ais subfamily.

The protein resides in the periplasm. The protein operates within bacterial outer membrane biogenesis; lipopolysaccharide metabolism. In terms of biological role, catalyzes the dephosphorylation of heptose(II) of the outer membrane lipopolysaccharide core. This chain is Lipopolysaccharide core heptose(II)-phosphate phosphatase, found in Escherichia coli (strain SE11).